Here is a 228-residue protein sequence, read N- to C-terminus: Large ribosomal subunit protein uL3 (228 aa).

The segment at 157–176 (CHRHAGGTGMSASPSRTFKG) is disordered.

It belongs to the universal ribosomal protein uL3 family. As to quaternary structure, part of the 50S ribosomal subunit. Forms a cluster with proteins L14 and L19.

One of the primary rRNA binding proteins, it binds directly near the 3'-end of the 23S rRNA, where it nucleates assembly of the 50S subunit. The polypeptide is Large ribosomal subunit protein uL3 (Rhodopirellula baltica (strain DSM 10527 / NCIMB 13988 / SH1)).